We begin with the raw amino-acid sequence, 73 residues long: U-scoloptoxin(22)-Cw1a (73 aa).

The signal sequence occupies residues 1 to 24 (MRRFVFLAFVLVLFVIANLDSSSA).

Belongs to the scoloptoxin-22 family. Contains 1 disulfide bond. Expressed by the venom gland.

Its subcellular location is the secreted. In Cormocephalus westwoodi (Westwood's green centipede), this protein is U-scoloptoxin(22)-Cw1a.